A 259-amino-acid chain; its full sequence is Tonin (259 aa).

A signal peptide spans 1–18 (MWLQILSLVLSVGRIDAA). Positions 19–24 (PPGQSR) are cleaved as a propeptide — activation peptide. In terms of domain architecture, Peptidase S1 spans 25–256 (IVGGYKCEKN…FTSWIKKVMK (232 aa)). 5 disulfides stabilise this stretch: Cys-31/Cys-171, Cys-48/Cys-64, Cys-150/Cys-217, Cys-182/Cys-196, and Cys-207/Cys-232. His-63 serves as the catalytic Charge relay system. His-63 lines the Zn(2+) pocket. Residue Asn-106 is glycosylated (N-linked (GlcNAc...) asparagine). Residues His-113 and His-115 each coordinate Zn(2+). Asp-118 acts as the Charge relay system in catalysis. Asn-189 carries an N-linked (GlcNAc...) asparagine glycan. Catalysis depends on Ser-211, which acts as the Charge relay system.

This sequence belongs to the peptidase S1 family. Kallikrein subfamily. Monomer. Zn(2+) serves as cofactor. Found in submaxillary gland.

The catalysed reaction is Preferential cleavage of Arg-|-Xaa bonds in small molecule substrates. Highly selective action to release kallidin (lysyl-bradykinin) from kininogen involves hydrolysis of Met-|-Xaa or Leu-|-Xaa.. Functionally, this protein has both trypsin- and chymotrypsin-like activities, being able to release angiotensin II from angiotensin I or angiotensinogen. The sequence is that of Tonin (Klk2) from Rattus norvegicus (Rat).